The following is a 117-amino-acid chain: Large ribosomal subunit protein bL19 (117 aa).

Belongs to the bacterial ribosomal protein bL19 family.

Its function is as follows. This protein is located at the 30S-50S ribosomal subunit interface and may play a role in the structure and function of the aminoacyl-tRNA binding site. This chain is Large ribosomal subunit protein bL19, found in Exiguobacterium sp. (strain ATCC BAA-1283 / AT1b).